The sequence spans 526 residues: Peptide chain release factor 3 (526 aa).

Residues Asp-9 to Leu-277 enclose the tr-type G domain. Residues Ser-18 to Thr-25, Asp-86 to His-90, and Asn-140 to Asp-143 each bind GTP.

Belongs to the TRAFAC class translation factor GTPase superfamily. Classic translation factor GTPase family. PrfC subfamily.

It localises to the cytoplasm. Functionally, increases the formation of ribosomal termination complexes and stimulates activities of RF-1 and RF-2. It binds guanine nucleotides and has strong preference for UGA stop codons. It may interact directly with the ribosome. The stimulation of RF-1 and RF-2 is significantly reduced by GTP and GDP, but not by GMP. The sequence is that of Peptide chain release factor 3 from Colwellia psychrerythraea (strain 34H / ATCC BAA-681) (Vibrio psychroerythus).